The primary structure comprises 147 residues: uncharacterized protein (147 aa).

Residues Val110–Ala133 are disordered. Pro residues predominate over residues Pro113–Lys128.

This is an uncharacterized protein from Ictalurid herpesvirus 1 (strain Auburn) (IcHV-1).